We begin with the raw amino-acid sequence, 276 residues long: Diaminopimelate epimerase (276 aa).

Substrate-binding residues include N13, Q46, and N66. C75 functions as the Proton donor in the catalytic mechanism. Residues 76 to 77 (GN), N159, N192, and 210 to 211 (ER) contribute to the substrate site. Residue C219 is the Proton acceptor of the active site. A substrate-binding site is contributed by 220–221 (GT).

It belongs to the diaminopimelate epimerase family. In terms of assembly, homodimer.

Its subcellular location is the cytoplasm. The enzyme catalyses (2S,6S)-2,6-diaminopimelate = meso-2,6-diaminopimelate. Its pathway is amino-acid biosynthesis; L-lysine biosynthesis via DAP pathway; DL-2,6-diaminopimelate from LL-2,6-diaminopimelate: step 1/1. Functionally, catalyzes the stereoinversion of LL-2,6-diaminopimelate (L,L-DAP) to meso-diaminopimelate (meso-DAP), a precursor of L-lysine and an essential component of the bacterial peptidoglycan. This chain is Diaminopimelate epimerase, found in Pseudomonas fluorescens (strain Pf0-1).